A 422-amino-acid polypeptide reads, in one-letter code: G-protein coupled receptor 83 (422 aa).

Positions 1 to 16 are cleaved as a signal peptide; the sequence is MGRRGALLCLLPLLRA. Topologically, residues 17–70 are extracellular; the sequence is AERPEGRADEPGLEAALAGPNASHFFWSNYSFSDWQNFVGRRRYGAESQNPTVK. Residues N37 and N45 are each glycosylated (N-linked (GlcNAc...) asparagine). A helical membrane pass occupies residues 71–91; that stretch reads ALLVVAYSFIIVFSLFGNVLV. Residues 92–106 lie on the Cytoplasmic side of the membrane; it reads CHVIFKNQRMRSATS. The chain crosses the membrane as a helical span at residues 107-128; the sequence is LFIVNLAVADILITLLNTPFTL. Over 129-144 the chain is Extracellular; the sequence is VRFVNSTWVFGKGMCH. N133 carries an N-linked (GlcNAc...) asparagine glycan. Residues 145–166 form a helical membrane-spanning segment; sequence VSRFAQYCSLHVSALTLTAIAV. The Cytoplasmic segment spans residues 167-185; the sequence is DRHQVIMHPLKPRISITKG. A helical membrane pass occupies residues 186 to 207; sequence VIYITVIWTMATFFSLPHAICQ. Topologically, residues 208–237 are extracellular; the sequence is KLFTFKYSEDIVRSLCLPDFPEPADLFWKY. Residues 238-259 form a helical membrane-spanning segment; it reads LDLATFILLYILPLLIISVAYA. Residues 260 to 292 lie on the Cytoplasmic side of the membrane; the sequence is RVAKKLWLCNTIGDVTTEQYLALRRKKKKTIKM. A helical transmembrane segment spans residues 293–314; sequence LMLVVVLFALCWFPLNCYVLLL. Topologically, residues 315-326 are extracellular; the sequence is SSKVIHTNNALY. Residues 327–347 form a helical membrane-spanning segment; it reads FAFHWFAMSSTCYNPFIYCWL. The Cytoplasmic portion of the chain corresponds to 348–422; it reads NENFRIELKA…SSVEPIVAMS (75 aa).

It belongs to the G-protein coupled receptor 1 family.

It localises to the cell membrane. Functionally, G-protein coupled receptor for PEN, a neuropeptide produced from the precursor protein, proSAAS (encoded by PCSK1N). Acts through a G(i)- and G(q)-alpha-alpha-mediated pathway in response to PEN. Plays a role in food intake and body weight regulation. May contribute to the regulation of anxiety-related behaviors. The polypeptide is G-protein coupled receptor 83 (GPR83) (Canis lupus familiaris (Dog)).